A 147-amino-acid chain; its full sequence is Hemoglobin subunit epsilon (147 aa).

Positions 3–147 (HFTAEEKSTI…VATALAHKYH (145 aa)) constitute a Globin domain. Serine 14 and serine 51 each carry phosphoserine. Positions 64 and 93 each coordinate heme b.

Belongs to the globin family. As to quaternary structure, heterotetramer of two alpha chains and two epsilon chains in early embryonic hemoglobin Gower-2; two zeta chains and two epsilon chains in early embryonic hemoglobin Gower-1. Red blood cells.

In terms of biological role, the epsilon chain is a beta-type chain of early mammalian embryonic hemoglobin. This Microcebus murinus (Gray mouse lemur) protein is Hemoglobin subunit epsilon (HBE1).